The chain runs to 691 residues: DNA ligase (691 aa).

NAD(+) contacts are provided by residues 41–45 (DAEYD), 90–91 (SL), and Glu-130. The active-site N6-AMP-lysine intermediate is the Lys-132. Arg-153, Glu-190, Lys-307, and Lys-331 together coordinate NAD(+). Residues Cys-425, Cys-428, Cys-443, and Cys-449 each coordinate Zn(2+). The BRCT domain occupies 610-691 (APQGVLAGKT…LHQLLEGNTP (82 aa)).

The protein belongs to the NAD-dependent DNA ligase family. LigA subfamily. The cofactor is Mg(2+). Mn(2+) is required as a cofactor.

It carries out the reaction NAD(+) + (deoxyribonucleotide)n-3'-hydroxyl + 5'-phospho-(deoxyribonucleotide)m = (deoxyribonucleotide)n+m + AMP + beta-nicotinamide D-nucleotide.. Its function is as follows. DNA ligase that catalyzes the formation of phosphodiester linkages between 5'-phosphoryl and 3'-hydroxyl groups in double-stranded DNA using NAD as a coenzyme and as the energy source for the reaction. It is essential for DNA replication and repair of damaged DNA. The chain is DNA ligase from Burkholderia cenocepacia (strain HI2424).